We begin with the raw amino-acid sequence, 281 residues long: Pre T-cell antigen receptor alpha (281 aa).

The signal sequence occupies residues 1–23 (MAGTWLLLLLALGCPALPTGVGG). Over 24-146 (TPFPSLAPPI…QEPLRGTPGG (123 aa)) the chain is Extracellular. C47 and C107 are oxidised to a cystine. N67 is a glycosylation site (N-linked (GlcNAc...) asparagine). A helical membrane pass occupies residues 147–167 (ALWLGVLRLLLFKLLLFDLLL). At 168–281 (TCSCLCDPAG…LPPPLQAGAA (114 aa)) the chain is on the cytoplasmic side. The tract at residues 196–233 (LHPATETGGREATSSPRPQPRDRRWGDTPPGRKPGSPV) is disordered.

In terms of assembly, heterodimer with TCRB; disulfide linked. This heterodimer assembles with CD3 proteins into a signaling-competent pre-T-cell receptor complex. Interacts with RHBDD1. Expressed in immature but not mature T-cells. Also found in CD34+ cells from peripheral blood, CD34+ precursors from umbilical cord blood and adult bone marrow.

The protein resides in the membrane. Its subcellular location is the cell membrane. In terms of biological role, component of the pre-T-cell receptor complex (composed of PTCRA, TCRB and the CD3 complex) that has a crucial role in early T-cell development, particularly alpha-beta T cell differentiation. This chain is Pre T-cell antigen receptor alpha, found in Homo sapiens (Human).